Consider the following 189-residue polypeptide: ATP synthase subunit b (189 aa).

A helical transmembrane segment spans residues 38-58; it reads PMFLATLIAFILVVLILWFLL.

Belongs to the ATPase B chain family. F-type ATPases have 2 components, F(1) - the catalytic core - and F(0) - the membrane proton channel. F(1) has five subunits: alpha(3), beta(3), gamma(1), delta(1), epsilon(1). F(0) has three main subunits: a(1), b(2) and c(10-14). The alpha and beta chains form an alternating ring which encloses part of the gamma chain. F(1) is attached to F(0) by a central stalk formed by the gamma and epsilon chains, while a peripheral stalk is formed by the delta and b chains.

It localises to the cell membrane. Functionally, f(1)F(0) ATP synthase produces ATP from ADP in the presence of a proton or sodium gradient. F-type ATPases consist of two structural domains, F(1) containing the extramembraneous catalytic core and F(0) containing the membrane proton channel, linked together by a central stalk and a peripheral stalk. During catalysis, ATP synthesis in the catalytic domain of F(1) is coupled via a rotary mechanism of the central stalk subunits to proton translocation. Its function is as follows. Component of the F(0) channel, it forms part of the peripheral stalk, linking F(1) to F(0). This is ATP synthase subunit b from Mycoplasmopsis agalactiae (strain NCTC 10123 / CIP 59.7 / PG2) (Mycoplasma agalactiae).